The following is a 588-amino-acid chain: ATP-dependent lipid A-core flippase (588 aa).

6 helical membrane passes run 23–43 (FWPVLLLGVLANILYSGIDAG), 56–76 (FITIDLNFVKQIPLIVLIGIT), 141–161 (DALTDFIQNICLVIGLLTVMM), 162–182 (VICWQLSLMFLLTIPFVGIIV), 257–277 (LVIAIGIATIIMAAIHLSTVI), and 278–298 (TISAGSFLAIIAAMLQLIKPM). Residues 28–310 (LLGVLANILY…LTTLNATIQR (283 aa)) enclose the ABC transmembrane type-1 domain. Residues 342–576 (IEFKHVYHAY…DGHYAQLYKV (235 aa)) enclose the ABC transporter domain. ATP is bound at residue 375–382 (GHSGSGKT).

Belongs to the ABC transporter superfamily. Lipid exporter (TC 3.A.1.106) family. As to quaternary structure, homodimer.

It is found in the cell inner membrane. It catalyses the reaction ATP + H2O + lipid A-core oligosaccharideSide 1 = ADP + phosphate + lipid A-core oligosaccharideSide 2.. Involved in lipopolysaccharide (LPS) biosynthesis. Translocates lipid A-core from the inner to the outer leaflet of the inner membrane. Transmembrane domains (TMD) form a pore in the inner membrane and the ATP-binding domain (NBD) is responsible for energy generation. In Legionella pneumophila subsp. pneumophila (strain Philadelphia 1 / ATCC 33152 / DSM 7513), this protein is ATP-dependent lipid A-core flippase.